An 897-amino-acid polypeptide reads, in one-letter code: Staphylococcal nuclease domain-containing protein 1 (897 aa).

TNase-like domains are found at residues 18 to 167, 194 to 329, 342 to 499, and 528 to 663; these read QLQR…LWSE, KPVN…IWKD, RQFV…LHSK, and GRSE…LWAN. The Tudor domain occupies 732-790; it reads APRRGEFCIAKFADGEWYRARVEKVESPAKVHVFYIDYGNREVLSSTRLAALPPAFSTR.

The protein localises to the cytoplasm. This is Staphylococcal nuclease domain-containing protein 1 (snd1) from Danio rerio (Zebrafish).